Consider the following 179-residue polypeptide: Ribosome-recycling factor (179 aa).

This sequence belongs to the RRF family.

Its subcellular location is the cytoplasm. Responsible for the release of ribosomes from messenger RNA at the termination of protein biosynthesis. May increase the efficiency of translation by recycling ribosomes from one round of translation to another. The sequence is that of Ribosome-recycling factor from Chlamydia trachomatis serovar L2b (strain UCH-1/proctitis).